The following is a 345-amino-acid chain: Dihydroorotase (345 aa).

Histidine 14 and histidine 16 together coordinate Zn(2+). Substrate contacts are provided by residues 16–18 (HLR) and asparagine 42. Residues lysine 100, histidine 137, and histidine 175 each coordinate Zn(2+). Lysine 100 carries the N6-carboxylysine modification. A substrate-binding site is contributed by histidine 137. Position 220 (leucine 220) interacts with substrate. Aspartate 248 contacts Zn(2+). Aspartate 248 is a catalytic residue. Residues histidine 252 and alanine 264 each coordinate substrate.

Belongs to the metallo-dependent hydrolases superfamily. DHOase family. Class II DHOase subfamily. Homodimer. Zn(2+) serves as cofactor.

It carries out the reaction (S)-dihydroorotate + H2O = N-carbamoyl-L-aspartate + H(+). Its pathway is pyrimidine metabolism; UMP biosynthesis via de novo pathway; (S)-dihydroorotate from bicarbonate: step 3/3. Its function is as follows. Catalyzes the reversible cyclization of carbamoyl aspartate to dihydroorotate. The sequence is that of Dihydroorotase from Methylobacillus flagellatus (strain ATCC 51484 / DSM 6875 / VKM B-1610 / KT).